Consider the following 969-residue polypeptide: RNA polymerase-associated protein RapA (969 aa).

A Helicase ATP-binding domain is found at 164 to 334 (EVGRRYAPRV…FARLRLLDPD (171 aa)). 177–184 (DEVGLGKT) is a binding site for ATP. Residues 280 to 283 (DEAH) carry the DEAH box motif. The 177-residue stretch at 492 to 668 (RVNWLLELLK…GKSDGLESLI (177 aa)) folds into the Helicase C-terminal domain.

It belongs to the SNF2/RAD54 helicase family. RapA subfamily. Interacts with the RNAP. Has a higher affinity for the core RNAP than for the holoenzyme. Its ATPase activity is stimulated by binding to RNAP.

Functionally, transcription regulator that activates transcription by stimulating RNA polymerase (RNAP) recycling in case of stress conditions such as supercoiled DNA or high salt concentrations. Probably acts by releasing the RNAP, when it is trapped or immobilized on tightly supercoiled DNA. Does not activate transcription on linear DNA. Probably not involved in DNA repair. This Aliivibrio fischeri (strain MJ11) (Vibrio fischeri) protein is RNA polymerase-associated protein RapA.